Consider the following 599-residue polypeptide: 2-succinyl-5-enolpyruvyl-6-hydroxy-3-cyclohexene-1-carboxylate synthase (599 aa).

A compositionally biased stretch (low complexity) spans 1-21 (MTSENPLDPNNAYAAADDAPL). The tract at residues 1 to 35 (MTSENPLDPNNAYAAADDAPLSEGDPTGAPADSGS) is disordered.

The protein belongs to the TPP enzyme family. MenD subfamily. As to quaternary structure, homodimer. Mg(2+) is required as a cofactor. Requires Mn(2+) as cofactor. It depends on thiamine diphosphate as a cofactor.

It catalyses the reaction isochorismate + 2-oxoglutarate + H(+) = 5-enolpyruvoyl-6-hydroxy-2-succinyl-cyclohex-3-ene-1-carboxylate + CO2. It functions in the pathway quinol/quinone metabolism; 1,4-dihydroxy-2-naphthoate biosynthesis; 1,4-dihydroxy-2-naphthoate from chorismate: step 2/7. The protein operates within quinol/quinone metabolism; menaquinone biosynthesis. Functionally, catalyzes the thiamine diphosphate-dependent decarboxylation of 2-oxoglutarate and the subsequent addition of the resulting succinic semialdehyde-thiamine pyrophosphate anion to isochorismate to yield 2-succinyl-5-enolpyruvyl-6-hydroxy-3-cyclohexene-1-carboxylate (SEPHCHC). The sequence is that of 2-succinyl-5-enolpyruvyl-6-hydroxy-3-cyclohexene-1-carboxylate synthase from Arthrobacter sp. (strain FB24).